The following is a 465-amino-acid chain: GTPase Der (465 aa).

2 EngA-type G domains span residues 3–166 (FLVA…LNEY) and 184–358 (IHFS…ACAN). Residues 9–16 (GRANVGKS), 56–60 (DTGGI), 118–121 (NKVD), 190–197 (GRPNVGKS), 237–241 (DTAGV), and 302–305 (NKWD) each bind GTP. A KH-like domain is found at 359-443 (KKITTADATR…PIVFEFKQSE (85 aa)). A disordered region spans residues 446–465 (FADRKNKRSKDEGSKSKKVK).

Belongs to the TRAFAC class TrmE-Era-EngA-EngB-Septin-like GTPase superfamily. EngA (Der) GTPase family. In terms of assembly, associates with the 50S ribosomal subunit.

Functionally, GTPase that plays an essential role in the late steps of ribosome biogenesis. This is GTPase Der from Francisella tularensis subsp. novicida (strain U112).